The primary structure comprises 376 residues: Succinyl-diaminopimelate desuccinylase (376 aa).

H67 lines the Zn(2+) pocket. The active site involves D69. Residue D100 participates in Zn(2+) binding. E134 serves as the catalytic Proton acceptor. Zn(2+) contacts are provided by E135, E163, and H349.

The protein belongs to the peptidase M20A family. DapE subfamily. Homodimer. Zn(2+) serves as cofactor. The cofactor is Co(2+).

The enzyme catalyses N-succinyl-(2S,6S)-2,6-diaminopimelate + H2O = (2S,6S)-2,6-diaminopimelate + succinate. It participates in amino-acid biosynthesis; L-lysine biosynthesis via DAP pathway; LL-2,6-diaminopimelate from (S)-tetrahydrodipicolinate (succinylase route): step 3/3. Catalyzes the hydrolysis of N-succinyl-L,L-diaminopimelic acid (SDAP), forming succinate and LL-2,6-diaminopimelate (DAP), an intermediate involved in the bacterial biosynthesis of lysine and meso-diaminopimelic acid, an essential component of bacterial cell walls. This Shewanella denitrificans (strain OS217 / ATCC BAA-1090 / DSM 15013) protein is Succinyl-diaminopimelate desuccinylase.